Consider the following 287-residue polypeptide: D-alanine--D-alanine ligase (287 aa).

The region spanning 98–283 (KTKQIAQSVG…FDDVVRITVE (186 aa)) is the ATP-grasp domain. 124 to 169 (PVIIKPVDEGSSKGLFLCNNKEEAEEAVKKLAKPIIEDYIIGEELT) is an ATP binding site. Mg(2+)-binding residues include Asp238, Glu250, and Asn252.

Belongs to the D-alanine--D-alanine ligase family. Mg(2+) serves as cofactor. The cofactor is Mn(2+).

Its subcellular location is the cytoplasm. The catalysed reaction is 2 D-alanine + ATP = D-alanyl-D-alanine + ADP + phosphate + H(+). Its pathway is cell wall biogenesis; peptidoglycan biosynthesis. In terms of biological role, cell wall formation. The chain is D-alanine--D-alanine ligase from Fusobacterium nucleatum subsp. nucleatum (strain ATCC 25586 / DSM 15643 / BCRC 10681 / CIP 101130 / JCM 8532 / KCTC 2640 / LMG 13131 / VPI 4355).